A 319-amino-acid chain; its full sequence is Malate dehydrogenase (319 aa).

Residues 10-15 and Asp-34 contribute to the NAD(+) site; that span reads GAGNIG. Substrate contacts are provided by Arg-83 and Arg-89. Residues Asn-96 and 119-121 contribute to the NAD(+) site; that span reads ITN. The substrate site is built by Asn-121 and Arg-152. His-176 functions as the Proton acceptor in the catalytic mechanism.

This sequence belongs to the LDH/MDH superfamily. MDH type 3 family.

The catalysed reaction is (S)-malate + NAD(+) = oxaloacetate + NADH + H(+). In terms of biological role, catalyzes the reversible oxidation of malate to oxaloacetate. In Francisella tularensis subsp. mediasiatica (strain FSC147), this protein is Malate dehydrogenase.